The sequence spans 1809 residues: Stereocilin (1809 aa).

The signal sequence occupies residues 1-22 (MALSLQPQLLLLLSLLPQEVTS). N-linked (GlcNAc...) asparagine glycosylation is found at N63, N200, N295, N352, and N364. A disordered region spans residues 376–426 (PATPRPPPTTPRPPPTTPQPPPTTTQPIPDTTQPPPVTPRPPPTTPQPPPS). Composition is skewed to pro residues over residues 378-399 (TPRPPPTTPRPPPTTPQPPPTT) and 407-426 (TQPPPVTPRPPPTTPQPPPS). 10 N-linked (GlcNAc...) asparagine glycosylation sites follow: N467, N516, N580, N605, N696, N860, N952, N1000, N1213, and N1308.

The protein belongs to the stereocilin family. As to expression, strongly expressed in the inner ear, detected in the testis, and barely detected in the eye. Detected in the six sensory areas of the inner ear by immunofluorescence. Expressed only in the sensory hair cells and associated with the stereocilia, the stiff microvilli forming the structure for mechanoreception of sound stimulation.

Its subcellular location is the cell surface. The protein localises to the cell projection. It localises to the kinocilium. It is found in the stereocilium. Functionally, essential to the formation of horizontal top connectors between outer hair cell stereocilia. The polypeptide is Stereocilin (Strc) (Mus musculus (Mouse)).